The primary structure comprises 252 residues: Trans-aconitate 2-methyltransferase (252 aa).

This sequence belongs to the methyltransferase superfamily. Tam family. In terms of assembly, monomer.

The protein localises to the cytoplasm. It catalyses the reaction trans-aconitate + S-adenosyl-L-methionine = (E)-3-(methoxycarbonyl)pent-2-enedioate + S-adenosyl-L-homocysteine. In terms of biological role, catalyzes the S-adenosylmethionine monomethyl esterification of trans-aconitate at high affinity and of cis-aconitate, isocitrate, and citrate at lower velocities and affinities. The protein is Trans-aconitate 2-methyltransferase (tam) of Escherichia coli O157:H7.